The chain runs to 222 residues: UPF0502 protein XCC4136 (222 aa).

The protein belongs to the UPF0502 family.

This chain is UPF0502 protein XCC4136, found in Xanthomonas campestris pv. campestris (strain ATCC 33913 / DSM 3586 / NCPPB 528 / LMG 568 / P 25).